The chain runs to 353 residues: N-terminal EF-hand calcium-binding protein 3 (353 aa).

Positions 27 to 62 constitute an EF-hand domain; that stretch reads AGHALFQDVFRRADKNDDGKLSFEEFQNYFADGVLS. Residues Asp40, Asn42, Asp44, Lys46, and Glu51 each contribute to the Ca(2+) site. The required for interaction with APBA3 stretch occupies residues 172–181; sequence IKAQSRPCGS. Residues 193–203 show a composition bias toward low complexity; the sequence is SWSPSWSPGSS. Residues 193 to 213 are disordered; sequence SWSPSWSPGSSDTGRSSEAEQ. Polar residues predominate over residues 204-213; the sequence is DTGRSSEAEQ. An ABM domain is found at 253-342; sequence LVAQRQVQVA…QAPDTLTTVF (90 aa).

In terms of assembly, interacts with the N-terminal domain of APBA2. Interacts with NEK2. Interacts with APBA3; APBA3 seems to mediate the interaction between NECAB3 and HIF1AN. Post-translationally, phosphorylated by NEK2. As to expression, widely expressed, with highest levels in the brain.

Its subcellular location is the golgi apparatus. Its function is as follows. Inhibits the interaction of APBA2 with amyloid-beta precursor protein (APP), and hence allows formation of amyloid-beta. May enhance the activity of HIF1A and thus promote glycolysis under normoxic conditions; the function requires its ABM domain and may implicate the stabilization of the interaction between HIF1AN and APBA3. The polypeptide is N-terminal EF-hand calcium-binding protein 3 (Necab3) (Mus musculus (Mouse)).